A 224-amino-acid chain; its full sequence is PHD finger-containing protein 5 (224 aa).

The segment at 31-81 (KKPCEVCGSDANELLMMTCFMCRDTREHTYCARVMFQRVPRLWICEECRDF) adopts a PHD-type zinc-finger fold. Zn(2+) contacts are provided by C34, C37, C49, C52, H58, C61, C75, and C78. The interval 116-137 (PRTNQVVDNHQDPPIDQTDPSS) is disordered.

As to quaternary structure, interacts directly with AIPP3/BDT1.

Functionally, together with AIPP3/BDT1, cooperates to form a BAH-PHD bivalent histone reader complex able to read histone H3 lysine 27 trimethylation (H3K27me3) histone marks in order to regulate transcription, especially to prevent early flowering; promotes AIPP3/BDT1 binding to H3K27me3. The polypeptide is PHD finger-containing protein 5 (Arabidopsis thaliana (Mouse-ear cress)).